The sequence spans 598 residues: Terpenoid synthase 1 (598 aa).

Residues aspartate 362, aspartate 366, asparagine 494, and aspartate 502 each coordinate Mg(2+). A DDXXD motif motif is present at residues 362–366 (DDTCD).

Belongs to the terpene synthase family. Tpsa subfamily. Mg(2+) serves as cofactor. Mn(2+) is required as a cofactor. In terms of tissue distribution, expressed exclusively in siliques.

It is found in the cytoplasm. The protein operates within secondary metabolite biosynthesis; terpenoid biosynthesis. This chain is Terpenoid synthase 1 (TPS01), found in Arabidopsis thaliana (Mouse-ear cress).